Reading from the N-terminus, the 684-residue chain is Galactocerebrosidase (684 aa).

The N-terminal stretch at 1–42 is a signal peptide; sequence MANSQPKASQQRQAKVMTAAAGSASRVAVPLLLCALLVPGGA. The substrate site is built by threonine 109, tryptophan 151, and asparagine 197. The active-site Proton donor/acceptor is the glutamate 198. The Nucleophile role is filled by glutamate 274. Cysteine 287 and cysteine 394 are disulfide-bonded. N-linked (GlcNAc...) asparagine glycosylation is found at asparagine 300 and asparagine 379. Arginine 396 contributes to the substrate binding site. Residues asparagine 403, asparagine 558, asparagine 601, and asparagine 645 are each glycosylated (N-linked (GlcNAc...) asparagine).

The protein belongs to the glycosyl hydrolase 59 family. In terms of tissue distribution, detected in brain and kidney.

The protein resides in the lysosome. It carries out the reaction a beta-D-galactosyl-(1&lt;-&gt;1')-N-acylsphing-4-enine + H2O = an N-acylsphing-4-enine + D-galactose. The enzyme catalyses a D-galactosylceramide + H2O = an N-acyl-sphingoid base + D-galactose. The catalysed reaction is beta-D-galactosyl-(1&lt;-&gt;1)-sphing-4-enine + H2O = sphing-4-enine + D-galactose. In terms of biological role, hydrolyzes the galactose ester bonds of glycolipids such as galactosylceramide and galactosylsphingosine. Enzyme with very low activity responsible for the lysosomal catabolism of galactosylceramide, a major lipid in myelin, kidney and epithelial cells of small intestine and colon. The sequence is that of Galactocerebrosidase from Mus musculus (Mouse).